Reading from the N-terminus, the 185-residue chain is Large ribosomal subunit protein bL25 (185 aa).

This sequence belongs to the bacterial ribosomal protein bL25 family. CTC subfamily. As to quaternary structure, part of the 50S ribosomal subunit; part of the 5S rRNA/L5/L18/L25 subcomplex. Contacts the 5S rRNA. Binds to the 5S rRNA independently of L5 and L18.

This is one of the proteins that binds to the 5S RNA in the ribosome where it forms part of the central protuberance. This is Large ribosomal subunit protein bL25 from Laribacter hongkongensis (strain HLHK9).